Consider the following 134-residue polypeptide: Translation initiation factor 2 subunit beta (134 aa).

A compositionally biased stretch (basic and acidic residues) spans 1–12 (MEYDDMLDRAME). Residues 1–28 (MEYDDMLDRAMEETPEIDGTSERFEVPD) are disordered.

The protein belongs to the eIF-2-beta/eIF-5 family. In terms of assembly, heterotrimer composed of an alpha, a beta and a gamma chain.

EIF-2 functions in the early steps of protein synthesis by forming a ternary complex with GTP and initiator tRNA. This chain is Translation initiation factor 2 subunit beta, found in Haloarcula marismortui (strain ATCC 43049 / DSM 3752 / JCM 8966 / VKM B-1809) (Halobacterium marismortui).